A 517-amino-acid chain; its full sequence is GMP synthase [glutamine-hydrolyzing] (517 aa).

A Glutamine amidotransferase type-1 domain is found at 11–202; that stretch reads KIIVLDFGSQ…AFNVCDAKAN (192 aa). The active-site Nucleophile is C88. Residues H176 and E178 contribute to the active site. Positions 203-392 constitute a GMPS ATP-PPase domain; it reads WTMDDFIEMQ…LGIPHDLVWR (190 aa). 230-236 contacts ATP; sequence SGGVDSS.

Homodimer.

The enzyme catalyses XMP + L-glutamine + ATP + H2O = GMP + L-glutamate + AMP + diphosphate + 2 H(+). It functions in the pathway purine metabolism; GMP biosynthesis; GMP from XMP (L-Gln route): step 1/1. In terms of biological role, catalyzes the synthesis of GMP from XMP. The chain is GMP synthase [glutamine-hydrolyzing] from Lactobacillus gasseri (strain ATCC 33323 / DSM 20243 / BCRC 14619 / CIP 102991 / JCM 1131 / KCTC 3163 / NCIMB 11718 / NCTC 13722 / AM63).